The primary structure comprises 62 residues: Toxin Tb2 (62 aa).

The LCN-type CS-alpha/beta domain maps to 1–62 (KEGYAMDHEG…KVWDYATNKC (62 aa)). 4 disulfide bridges follow: cysteine 11/cysteine 62, cysteine 15/cysteine 38, cysteine 23/cysteine 43, and cysteine 27/cysteine 45. Cysteine amide is present on cysteine 62.

Belongs to the long (4 C-C) scorpion toxin superfamily. Sodium channel inhibitor family. Beta subfamily. In terms of tissue distribution, expressed by the venom gland.

It localises to the secreted. Its function is as follows. Beta toxins bind voltage-independently at site-4 of sodium channels (Nav) and shift the voltage of activation toward more negative potentials thereby affecting sodium channel activation and promoting spontaneous and repetitive firing. This toxin is active on mammals. The chain is Toxin Tb2 from Tityus bahiensis (Brazilian scorpion).